The following is a 1164-amino-acid chain: Hamartin (1164 aa).

K30 is covalently cross-linked (Glycyl lysine isopeptide (Lys-Gly) (interchain with G-Cter in ubiquitin)). The tract at residues 403–787 (SDDYVHISLP…QIRQLQHDRE (385 aa)) is mediates interaction with WDR45B. A disordered region spans residues 439 to 571 (LNDRGSEEPP…ADESPAGDRE (133 aa)). A compositionally biased stretch (basic and acidic residues) spans 474–487 (EKDKEEAAISRELS). 5 positions are modified to phosphoserine: S487, S505, S511, S521, and S598. The segment covering 513 to 530 (PGSQRKTHSAASSSQGAS) has biased composition (polar residues). Positions 721-997 (RKVIKAAALE…AAEERLDCCN (277 aa)) form a coiled coil. A disordered region spans residues 1006–1085 (GHNEEASGHN…TTVGSLPSSK (80 aa)). A compositionally biased stretch (basic and acidic residues) spans 1007 to 1020 (HNEEASGHNGETKT). Positions 1073 to 1085 (SIPTTVGSLPSSK) are enriched in polar residues. Phosphoserine is present on S1100. Residues 1131-1164 (IPLNLDGPHPSPPTPDSVGQLHIMDYNETHHEHS) form a disordered region. The segment covering 1155–1164 (DYNETHHEHS) has biased composition (basic and acidic residues).

In terms of assembly, component of the TSC-TBC complex (also named Rhebulator complex), composed of 2 molecules of TSC1, 2 molecules of TSC2 and 1 molecule of TBC1D7. Probably forms a complex composed of chaperones HSP90 and HSP70, co-chaperones STIP1/HOP, CDC37, PPP5C, PTGES3/p23, TSC1 and client protein TSC2. Forms a complex composed of chaperones HSP90 and HSP70, co-chaperones CDC37, PPP5C, TSC1 and client protein TSC2, CDK4, AKT, RAF1 and NR3C1; this complex does not contain co-chaperones STIP1/HOP and PTGES3/p23. Forms a complex containing HSP90AA1, TSC1 and TSC2; TSC1 is required to recruit TCS2 to the complex. Interacts (via C-terminus) with the closed form of HSP90AA1 (via the middle domain and TPR repeat-binding motif). Interacts with DOCK7. Interacts with FBXW5. Interacts with WDR45B. Interacts with RPAP3 and URI1. Phosphorylation at Ser-505 does not affect interaction with TSC2. In terms of processing, 'Lys-63'-linked ubiquitinated at Lys-30 by PELI1; the ubiquitination promotes TSC1/TSC2 complex stability. As to expression, highly expressed in skeletal muscle, followed by heart, brain, placenta, pancreas, lung, liver and kidney. Also expressed in embryonic kidney cells.

It localises to the lysosome membrane. Its subcellular location is the cytoplasm. It is found in the cytosol. Non-catalytic component of the TSC-TBC complex, a multiprotein complex that acts as a negative regulator of the canonical mTORC1 complex, an evolutionarily conserved central nutrient sensor that stimulates anabolic reactions and macromolecule biosynthesis to promote cellular biomass generation and growth. The TSC-TBC complex acts as a GTPase-activating protein (GAP) for the small GTPase RHEB, a direct activator of the protein kinase activity of mTORC1. In absence of nutrients, the TSC-TBC complex inhibits mTORC1, thereby preventing phosphorylation of ribosomal protein S6 kinase (RPS6KB1 and RPS6KB2) and EIF4EBP1 (4E-BP1) by the mTORC1 signaling. The TSC-TBC complex is inactivated in response to nutrients, relieving inhibition of mTORC1. Within the TSC-TBC complex, TSC1 stabilizes TSC2 and prevents TSC2 self-aggregation. Acts as a tumor suppressor. Involved in microtubule-mediated protein transport via its ability to regulate mTORC1 signaling. Also acts as a co-chaperone for HSP90AA1 facilitating HSP90AA1 chaperoning of protein clients such as kinases, TSC2 and glucocorticoid receptor NR3C1. Increases ATP binding to HSP90AA1 and inhibits HSP90AA1 ATPase activity. Competes with the activating co-chaperone AHSA1 for binding to HSP90AA1, thereby providing a reciprocal regulatory mechanism for chaperoning of client proteins. Recruits TSC2 to HSP90AA1 and stabilizes TSC2 by preventing the interaction between TSC2 and ubiquitin ligase HERC1. The sequence is that of Hamartin from Homo sapiens (Human).